The chain runs to 295 residues: Ribosomal protein L11 methyltransferase (295 aa).

Residues threonine 145, glycine 166, aspartate 188, and asparagine 230 each contribute to the S-adenosyl-L-methionine site.

Belongs to the methyltransferase superfamily. PrmA family.

The protein localises to the cytoplasm. It carries out the reaction L-lysyl-[protein] + 3 S-adenosyl-L-methionine = N(6),N(6),N(6)-trimethyl-L-lysyl-[protein] + 3 S-adenosyl-L-homocysteine + 3 H(+). Functionally, methylates ribosomal protein L11. The polypeptide is Ribosomal protein L11 methyltransferase (Haemophilus influenzae (strain PittEE)).